The following is a 187-amino-acid chain: Ribosome-recycling factor (187 aa).

It belongs to the RRF family.

Its subcellular location is the cytoplasm. Its function is as follows. Responsible for the release of ribosomes from messenger RNA at the termination of protein biosynthesis. May increase the efficiency of translation by recycling ribosomes from one round of translation to another. The chain is Ribosome-recycling factor from Flavobacterium johnsoniae (strain ATCC 17061 / DSM 2064 / JCM 8514 / BCRC 14874 / CCUG 350202 / NBRC 14942 / NCIMB 11054 / UW101) (Cytophaga johnsonae).